The chain runs to 177 residues: Ubiquitin-conjugating enzyme E2 C (177 aa).

The disordered stretch occupies residues 1-31 (MSGQNIDPAANQVRQKERPRDMTTSKERHSV). The span at 14–30 (RQKERPRDMTTSKERHS) shows a compositional bias: basic and acidic residues. Residues 30 to 175 (SVSKRLQQEL…LHEKYKTAQS (146 aa)) enclose the UBC core domain. Catalysis depends on Cys114, which acts as the Glycyl thioester intermediate.

It belongs to the ubiquitin-conjugating enzyme family. As to quaternary structure, component of the APC/C complex. Autoubiquitinated by the APC/C complex, leading to its degradation by the proteasome.

The catalysed reaction is S-ubiquitinyl-[E1 ubiquitin-activating enzyme]-L-cysteine + [E2 ubiquitin-conjugating enzyme]-L-cysteine = [E1 ubiquitin-activating enzyme]-L-cysteine + S-ubiquitinyl-[E2 ubiquitin-conjugating enzyme]-L-cysteine.. It catalyses the reaction S-ubiquitinyl-[E1 ubiquitin-activating enzyme]-L-cysteine + [acceptor protein]-L-lysine = [E1 ubiquitin-activating enzyme]-L-cysteine + N(6)-monoubiquitinyl-[acceptor protein]-L-lysine.. The protein operates within protein modification; protein ubiquitination. Its function is as follows. Catalyzes the covalent attachment of ubiquitin to other proteins. Acts as an essential factor of the anaphase promoting complex/cyclosome (APC/C), a cell cycle-regulated ubiquitin ligase that is essential for the transition from metaphase to anaphase in mitosis. Involved in both degradation of proteins responsible for maintaining sister chromatid cohesion at the onset of anaphase and of mitotic cyclins A and B at the exit of mitosis. Acts by initiating polyubiquitin chains on APC/C substrates, leading to the degradation of APC/C substrates by the proteasome and promoting mitotic exit. The polypeptide is Ubiquitin-conjugating enzyme E2 C (UBE2C) (Spisula solidissima (Atlantic surf-clam)).